A 147-amino-acid polypeptide reads, in one-letter code: Leghemoglobin 3 (147 aa).

Residues 2 to 147 (GFTAQQEALV…LATAIKKAMG (146 aa)) form the Globin domain. Y30 is modified (nitrated tyrosine). Heme b is bound at residue S45. A Phosphoserine modification is found at S45. H61 contacts O2. Heme b is bound by residues K64, H93, and K96. A Nitrated tyrosine modification is found at Y135.

It belongs to the plant globin family. Monomer. Nitrated in effective nodules and particularly in hypoxic conditions; this mechanism may play a protective role in the symbiosis by buffering toxic peroxynitrite NO(2)(-). Nitration level decrease during nodule senescence. Post-translationally, phosphorylation at Ser-45 disrupts the molecular environment of its porphyrin ring oxygen binding pocket, thus leading to a reduced oxygen consumption and to the delivery of oxygen O(2) to symbiosomes. Specifically and strongly expressed in root nodules and at low levels in seedlings.

Its subcellular location is the cytoplasm. It is found in the cytosol. It localises to the nucleus. Its function is as follows. Leghemoglobin that reversibly binds oxygen O(2) through a pentacoordinated heme iron. In root nodules, facilitates the diffusion of oxygen to the bacteroids while preventing the bacterial nitrogenase from being inactivated by buffering dioxygen, nitric oxide and carbon monoxide, and promoting the formation of reactive oxygen species (ROS, e.g. H(2)O(2)). This role is essential for symbiotic nitrogen fixation (SNF). The sequence is that of Leghemoglobin 3 from Lotus japonicus (Lotus corniculatus var. japonicus).